We begin with the raw amino-acid sequence, 232 residues long: MGKIAGLVVAGGGGSRITNSVLPKQYLQVRGKAILQYTVEALFAHPKIECVHLVVNSKCEVHYLPILRNLSGYVVSLSEAGNTRTDSVFSGLKALECLNPSHVLIQDAARPFTTPKVINAVIKSLLEGCEGVVPVVPVQDTIIKREPEGIVTDVNRDELRIVQTPQGFDFCKIFAAYKAHFMCPSKRYTDDGSLALAHGIKVECIPGDSSNLKITHPFDLKFADFLLAQSHR.

Belongs to the IspD/TarI cytidylyltransferase family. IspD subfamily.

It catalyses the reaction 2-C-methyl-D-erythritol 4-phosphate + CTP + H(+) = 4-CDP-2-C-methyl-D-erythritol + diphosphate. It participates in isoprenoid biosynthesis; isopentenyl diphosphate biosynthesis via DXP pathway; isopentenyl diphosphate from 1-deoxy-D-xylulose 5-phosphate: step 2/6. Functionally, catalyzes the formation of 4-diphosphocytidyl-2-C-methyl-D-erythritol from CTP and 2-C-methyl-D-erythritol 4-phosphate (MEP). The chain is 2-C-methyl-D-erythritol 4-phosphate cytidylyltransferase from Neorickettsia sennetsu (strain ATCC VR-367 / Miyayama) (Ehrlichia sennetsu).